A 151-amino-acid polypeptide reads, in one-letter code: Macrodomain Ter protein (151 aa).

Belongs to the MatP family. As to quaternary structure, homodimer.

The protein localises to the cytoplasm. Its function is as follows. Required for spatial organization of the terminus region of the chromosome (Ter macrodomain) during the cell cycle. Prevents early segregation of duplicated Ter macrodomains during cell division. Binds specifically to matS, which is a 13 bp signature motif repeated within the Ter macrodomain. This Photorhabdus laumondii subsp. laumondii (strain DSM 15139 / CIP 105565 / TT01) (Photorhabdus luminescens subsp. laumondii) protein is Macrodomain Ter protein.